A 226-amino-acid chain; its full sequence is Cytidylate kinase (226 aa).

12–20 (GPSGAGKGT) provides a ligand contact to ATP.

Belongs to the cytidylate kinase family. Type 1 subfamily.

The protein localises to the cytoplasm. It catalyses the reaction CMP + ATP = CDP + ADP. The enzyme catalyses dCMP + ATP = dCDP + ADP. This Vibrio parahaemolyticus serotype O3:K6 (strain RIMD 2210633) protein is Cytidylate kinase.